The chain runs to 137 residues: Large ribosomal subunit protein uL16 (137 aa).

The protein belongs to the universal ribosomal protein uL16 family. As to quaternary structure, part of the 50S ribosomal subunit.

Binds 23S rRNA and is also seen to make contacts with the A and possibly P site tRNAs. This chain is Large ribosomal subunit protein uL16, found in Oleidesulfovibrio alaskensis (strain ATCC BAA-1058 / DSM 17464 / G20) (Desulfovibrio alaskensis).